The primary structure comprises 202 residues: MKALTTRQQEVFDLIRDHISQTGMPPTRAEIAQRLGFRSPNAAEEHLKALARKGAIEIVSGASRGIRLLTEEEHGLPLIGRVAAGEPLLAQQHIEGHYQVDPSMFKPNADFLLRVSGMSMKDIGILDGDLLAVHKTQDVRNGQVVVARIDDEVTVKRLKKQGNVVELLPENSEFTPIVVDLRQQSFTIEGLAVGVIRNGEWL.

Residues 28–48 (RAEIAQRLGFRSPNAAEEHLK) constitute a DNA-binding region (H-T-H motif). Active-site for autocatalytic cleavage activity residues include Ser-119 and Lys-156.

It belongs to the peptidase S24 family. In terms of assembly, homodimer.

It carries out the reaction Hydrolysis of Ala-|-Gly bond in repressor LexA.. Functionally, represses a number of genes involved in the response to DNA damage (SOS response), including recA and lexA. Binds to the 16 bp palindromic sequence 5'-CTGTATATATATACAG-3'. In the presence of single-stranded DNA, RecA interacts with LexA causing an autocatalytic cleavage which disrupts the DNA-binding part of LexA, leading to derepression of the SOS regulon and eventually DNA repair. This Klebsiella pneumoniae (strain 342) protein is LexA repressor.